A 123-amino-acid polypeptide reads, in one-letter code: Ribosome-binding factor A (123 aa).

Belongs to the RbfA family. In terms of assembly, monomer. Binds 30S ribosomal subunits, but not 50S ribosomal subunits or 70S ribosomes.

It is found in the cytoplasm. Its function is as follows. One of several proteins that assist in the late maturation steps of the functional core of the 30S ribosomal subunit. Associates with free 30S ribosomal subunits (but not with 30S subunits that are part of 70S ribosomes or polysomes). Required for efficient processing of 16S rRNA. May interact with the 5'-terminal helix region of 16S rRNA. The polypeptide is Ribosome-binding factor A (Prochlorococcus marinus (strain NATL1A)).